The following is a 1361-amino-acid chain: MAYSYTEKKRIRKDFGKLPDVMEVPYLLAIQLDSYRKFTQADTPFDQRKDMGLHAAFKSIFPIVSYSGNAALEYVSYALGKPVFDVKECVLRGATYAVPLRVKVRLIIYDKDSSSKAIKDIKEQEVYMGEIPLMTDNGTFVVNGTERVIVSQLHRSPGVFFEHDKGKTHSSGKLLYSARVIPYRGSWLDFEFDPKDLVFVRIDRRRKLPASILLRALGYTTEQMLDMFYETSKFGLTETGECVLELVPSRLRGDVTTFEIKDKDGNLIVEDGRRITARHIRQLEKAGVTELSVPHEYMVGRALAKDIINAESGEVLFECNTEITDEVLAELVKSGVKEFETLYTNELDCGPFISDTLRSDPARTQLEALVEIYRMMRPGEPPTKESAETLFQNLFFSSERYDLSAVGRMKFNRRLGRDSEVGSGTLSNEDIVDVLKTLIDIRNGKGVVDDIDHLGNRRVRSVGEMAENQFRVGLVRVERAVKERLSMAESEGLMPQDLINAKPVAAAVKEFFGSSQLSQFMDQNNPLSEVTHKRRVSALGPGGLTRERAGFEVRDVHPTHYGRVCPIETPEGPNIGLINSLATYARTNSYGFLESPHRKVVDGKVTDEIEYLSAINEAKFVIAQASAAQNENGELTEELVSVRFQNEFTLKGPSEVQYMDVSPRQVVSVAASLIPFLEHDDANRALMGSNMQRQAVPTLKAQKPLVGTGMERNVAADSGVCVVAKRGGVIERVDAARIVVRVADDEVEAGEAGVDIYNLTKYTRSNQNTCINQRSIVRTGEKVSRGDILADGPSVDLGELALGQNMRIAFMPWNGYNFEDSILVSERVVQEDRFTTIHIQELTCIARDTKLGSEEITADIPNVGEGALSKLDESGIVYVGAEVASGDILVGKVTPKGETQLTPEEKLLRAIFGEKASDVKDTSLRVPSSVKGTVIDVQVFTRDGLEKDQRSRDIEKAQLDQIRKDLNEEYRIVQGATFERLRAALVGNTAMTGKGVVKGQPVTDEMLDELSHDDWFKIRMNDDVLNEQIDAAEVALAERRKELDDRFEDKKGKLETGDDLAPGVLKIVKVYLAIKRRIQPGDKMAGRHGNKGVISVIMPVEDMPYDENGNPIDIVLNPLGVPSRMNVGQVLEMHLGLAAKSLGEKIDEMLKQQKAVAEIRQFLDQIYNQIGESYKAEELDTFSDDEIIELANNLRDGVPMATRAFDGAKEKEIKQLLTLGGMPDSGQMTLFDGRTGDPFQRPTTVGYMYMLKLNHLVDDKMHARSTGSYSLVTQQPLGGKAQFGGQRFGEMEVWALEAYGAAYTLQEMLTVKSDDVAGRTKMYKNIVDGDHRMEPGMPESFNVLVKEIRSLGINIELEQDN.

It belongs to the RNA polymerase beta chain family. As to quaternary structure, the RNAP catalytic core consists of 2 alpha, 1 beta, 1 beta' and 1 omega subunit. When a sigma factor is associated with the core the holoenzyme is formed, which can initiate transcription.

The catalysed reaction is RNA(n) + a ribonucleoside 5'-triphosphate = RNA(n+1) + diphosphate. Its function is as follows. DNA-dependent RNA polymerase catalyzes the transcription of DNA into RNA using the four ribonucleoside triphosphates as substrates. This Saccharophagus degradans (strain 2-40 / ATCC 43961 / DSM 17024) protein is DNA-directed RNA polymerase subunit beta.